Reading from the N-terminus, the 308-residue chain is Ribosomal RNA large subunit methyltransferase F (308 aa).

It belongs to the methyltransferase superfamily. METTL16/RlmF family.

Its subcellular location is the cytoplasm. It carries out the reaction adenosine(1618) in 23S rRNA + S-adenosyl-L-methionine = N(6)-methyladenosine(1618) in 23S rRNA + S-adenosyl-L-homocysteine + H(+). Its function is as follows. Specifically methylates the adenine in position 1618 of 23S rRNA. This chain is Ribosomal RNA large subunit methyltransferase F, found in Escherichia coli O127:H6 (strain E2348/69 / EPEC).